The primary structure comprises 276 residues: Diaminopimelate epimerase (276 aa).

Substrate-binding residues include Asn13, Gln46, and Asn66. Cys75 functions as the Proton donor in the catalytic mechanism. Residues 76 to 77 (GN), Asn159, Asn192, and 210 to 211 (ER) contribute to the substrate site. Residue Cys219 is the Proton acceptor of the active site. Position 220-221 (220-221 (GT)) interacts with substrate.

The protein belongs to the diaminopimelate epimerase family. In terms of assembly, homodimer.

It is found in the cytoplasm. It catalyses the reaction (2S,6S)-2,6-diaminopimelate = meso-2,6-diaminopimelate. It participates in amino-acid biosynthesis; L-lysine biosynthesis via DAP pathway; DL-2,6-diaminopimelate from LL-2,6-diaminopimelate: step 1/1. Catalyzes the stereoinversion of LL-2,6-diaminopimelate (L,L-DAP) to meso-diaminopimelate (meso-DAP), a precursor of L-lysine and an essential component of the bacterial peptidoglycan. This Pseudoalteromonas translucida (strain TAC 125) protein is Diaminopimelate epimerase.